The following is a 615-amino-acid chain: Peptidoglycan-binding protein YepA (615 aa).

Positions 1–26 (MRNLAALLPALFLLGSSLLPAGTALA) are cleaved as a signal peptide.

It belongs to the bacterial solute-binding protein 5 family. In terms of assembly, the complex is composed of one ATP-binding protein (YejF), two transmembrane proteins (YejB and YejE) and a solute-binding protein (YepA).

Its subcellular location is the periplasm. In terms of biological role, part of the ABC transporter complex YejBEF-YepA involved in the uptake of muropeptides, the breakdown products of cell wall peptidoglycan. The import of muropeptides into the cell enables peptidoglycan recycling, which is vital for cell wall integrity in this bacterium. Probably binds muropeptides. This is Peptidoglycan-binding protein YepA from Agrobacterium fabrum (strain C58 / ATCC 33970) (Agrobacterium tumefaciens (strain C58)).